A 623-amino-acid polypeptide reads, in one-letter code: DNA mismatch repair protein MutL (623 aa).

Positions 353–368 (AQQSAPRPANSYSPAS) are enriched in polar residues. A disordered region spans residues 353-389 (AQQSAPRPANSYSPASWRTAPPAPRSEWSPQTAQTAH).

Belongs to the DNA mismatch repair MutL/HexB family.

Functionally, this protein is involved in the repair of mismatches in DNA. It is required for dam-dependent methyl-directed DNA mismatch repair. May act as a 'molecular matchmaker', a protein that promotes the formation of a stable complex between two or more DNA-binding proteins in an ATP-dependent manner without itself being part of a final effector complex. In Brucella melitensis biotype 2 (strain ATCC 23457), this protein is DNA mismatch repair protein MutL.